We begin with the raw amino-acid sequence, 358 residues long: Thiol protease aleurain-like (358 aa).

Residues 1-21 (MSVKLNLSSSILLILFAAAAS) form the signal peptide. A propeptide spans 22–140 (KEIGFDESNP…KGSHKITEAT (119 aa)) (activation peptide). The N-linked (GlcNAc...) asparagine glycan is linked to asparagine 125. 2 disulfides stabilise this stretch: cysteine 162–cysteine 205 and cysteine 196–cysteine 238. Residue cysteine 165 is part of the active site. A glycan (N-linked (GlcNAc...) asparagine) is linked at asparagine 254. Residues cysteine 296 and cysteine 346 are joined by a disulfide bond. Active-site residues include histidine 305 and asparagine 325.

The protein belongs to the peptidase C1 family.

The protein localises to the vacuole. The enzyme catalyses Hydrolysis of proteins, acting as an aminopeptidase (notably, cleaving Arg-|-Xaa bonds) as well as an endopeptidase.. Functionally, may play a role in proteolysis leading to mobilization of nitrogen during senescence and starvation. The chain is Thiol protease aleurain-like from Arabidopsis thaliana (Mouse-ear cress).